We begin with the raw amino-acid sequence, 684 residues long: Protein SEEDLING PLASTID DEVELOPMENT 1 (684 aa).

The N-terminal 78 residues, 1–78, are a transit peptide targeting the chloroplast; that stretch reads MRALNSRLVL…FSFDVRSPSS (78 aa). The disordered stretch occupies residues 33-91; the sequence is SDSSSSFRRTRGARQRIASSKSPASSPSPVRRPSDGFSFDVRSPSSDSSISSRKSPTTA. Residues 50 to 88 are compositionally biased toward low complexity; the sequence is ASSKSPASSPSPVRRPSDGFSFDVRSPSSDSSISSRKSP. ATP is bound at residue 220 to 227; sequence GSPGVGKT. A disordered region spans residues 651–684; that stretch reads PRRSTKKTLTSSSPQKSADGSMGTTGTRLPFLKD. Residues 657–667 show a composition bias toward low complexity; that stretch reads KTLTSSSPQKS.

It belongs to the ycf45 family.

The protein localises to the plastid. It is found in the chloroplast membrane. It localises to the chloroplast envelope. In terms of biological role, required during eoplast (a highly reduced plastid type present during the degreening and dehydration stages of seed maturation) development in embryos and early stages of eoplast redifferentiation during seedling growth. In Arabidopsis thaliana (Mouse-ear cress), this protein is Protein SEEDLING PLASTID DEVELOPMENT 1.